We begin with the raw amino-acid sequence, 233 residues long: 7-cyano-7-deazaguanine synthase (233 aa).

ATP is bound at residue 7–17 (LSGGLDSAVTS). Zn(2+)-binding residues include Cys-195, Cys-206, Cys-209, and Cys-212.

Belongs to the QueC family. Zn(2+) serves as cofactor.

It carries out the reaction 7-carboxy-7-deazaguanine + NH4(+) + ATP = 7-cyano-7-deazaguanine + ADP + phosphate + H2O + H(+). It participates in purine metabolism; 7-cyano-7-deazaguanine biosynthesis. Functionally, catalyzes the ATP-dependent conversion of 7-carboxy-7-deazaguanine (CDG) to 7-cyano-7-deazaguanine (preQ(0)). The sequence is that of 7-cyano-7-deazaguanine synthase from Methanococcus maripaludis (strain C5 / ATCC BAA-1333).